Here is a 433-residue protein sequence, read N- to C-terminus: ATP-dependent protease ATPase subunit HslU (433 aa).

Residues I18, 60-65, D246, E311, and R383 each bind ATP; that span reads GVGKTE.

It belongs to the ClpX chaperone family. HslU subfamily. In terms of assembly, a double ring-shaped homohexamer of HslV is capped on each side by a ring-shaped HslU homohexamer. The assembly of the HslU/HslV complex is dependent on binding of ATP.

The protein resides in the cytoplasm. ATPase subunit of a proteasome-like degradation complex; this subunit has chaperone activity. The binding of ATP and its subsequent hydrolysis by HslU are essential for unfolding of protein substrates subsequently hydrolyzed by HslV. HslU recognizes the N-terminal part of its protein substrates and unfolds these before they are guided to HslV for hydrolysis. The chain is ATP-dependent protease ATPase subunit HslU from Cereibacter sphaeroides (strain ATCC 17029 / ATH 2.4.9) (Rhodobacter sphaeroides).